The following is a 300-amino-acid chain: PAK4-inhibitor INKA2 (300 aa).

3 disordered regions span residues 59-104 (GGTP…SSPK), 178-201 (LEKG…GQSR), and 230-288 (KEKP…LEPS). Polar residues predominate over residues 60 to 73 (GTPTFSCPESSQEQ). A compositionally biased stretch (low complexity) spans 93 to 102 (SSSQPSFDSS). The inka box stretch occupies residues 140–183 (EPDDWTSTLMSRGRNRQPLVLGDNVFADLVGNWLDLPELEKGGE). Residues 246–256 (GRSKKVKKRSL) are compositionally biased toward basic residues.

This sequence belongs to the INKA family. As to quaternary structure, interacts with PAK4. In terms of tissue distribution, enriched in the nervous system.

It is found in the nucleus. Its function is as follows. Inhibitor of the serine/threonine-protein kinase PAK4. Acts by binding PAK4 in a substrate-like manner, inhibiting the protein kinase activity. This is PAK4-inhibitor INKA2 from Mus musculus (Mouse).